A 212-amino-acid chain; its full sequence is Ribonuclease HII (212 aa).

Positions 7–212 (SQILGIDEAG…TIENITKSTE (206 aa)) constitute an RNase H type-2 domain. A divalent metal cation is bound by residues Asp13, Glu14, and Asp111.

Belongs to the RNase HII family. Mn(2+) serves as cofactor. Mg(2+) is required as a cofactor.

The protein resides in the cytoplasm. The catalysed reaction is Endonucleolytic cleavage to 5'-phosphomonoester.. In terms of biological role, endonuclease that specifically degrades the RNA of RNA-DNA hybrids. The sequence is that of Ribonuclease HII from Methanosphaera stadtmanae (strain ATCC 43021 / DSM 3091 / JCM 11832 / MCB-3).